Consider the following 70-residue polypeptide: Sec-independent protein translocase protein TatA (70 aa).

A helical transmembrane segment spans residues 1-21; that stretch reads MAIGVNQLLIILVIIVLLFGA.

It belongs to the TatA/E family. The Tat system comprises two distinct complexes: a TatABC complex, containing multiple copies of TatA, TatB and TatC subunits, and a separate TatA complex, containing only TatA subunits. Substrates initially bind to the TatABC complex, which probably triggers association of the separate TatA complex to form the active translocon.

The protein localises to the cell inner membrane. Part of the twin-arginine translocation (Tat) system that transports large folded proteins containing a characteristic twin-arginine motif in their signal peptide across membranes. TatA could form the protein-conducting channel of the Tat system. The protein is Sec-independent protein translocase protein TatA of Campylobacter curvus (strain 525.92).